The primary structure comprises 364 residues: Mitoferrin-2 (364 aa).

A compositionally biased stretch (gly residues) spans 1 to 17; it reads MELEGRGAGGVAGGPAA. 2 disordered regions span residues 1 to 28 and 40 to 60; these read MELEGRGAGGVAGGPAAGPGRSPGESAL and GAGGGEAGACRPPVRQDPDSG. Residues 18–27 show a composition bias toward low complexity; it reads GPGRSPGESA. Solcar repeat units lie at residues 70–158, 168–252, and 259–352; these read ATVT…LKKT, NSHI…LQEH, and YNPS…FKYL. The next 6 membrane-spanning stretches (helical) occupy residues 72 to 91, 133 to 152, 170 to 189, 227 to 246, 261 to 280, and 327 to 346; these read VTTHMVAGAVAGILEHCVMY, GLNVTATGAGPAHALYFACY, HIANGAAGCVATLLHDAAMN, SYTTQLTMNVPFQAIHFMTY, PSSHVLSGACAGAVAAAATT, and GVQARVIYQIPSTAIAWSVY.

It belongs to the mitochondrial carrier (TC 2.A.29) family. As to expression, ubiquitous. Expressed in placenta, lung, kidney, pancreas, liver, brain, skeletal muscle and heart.

The protein localises to the mitochondrion inner membrane. The catalysed reaction is Fe(2+)(in) = Fe(2+)(out). Mitochondrial iron transporter that mediates iron uptake. Probably required for heme synthesis of hemoproteins and Fe-S cluster assembly in non-erythroid cells. The sequence is that of Mitoferrin-2 (SLC25A28) from Homo sapiens (Human).